The chain runs to 207 residues: High frequency lysogenization protein HflD homolog (207 aa).

It belongs to the HflD family.

Its subcellular location is the cytoplasm. It is found in the cell inner membrane. This chain is High frequency lysogenization protein HflD homolog, found in Pseudomonas fluorescens (strain ATCC BAA-477 / NRRL B-23932 / Pf-5).